A 336-amino-acid polypeptide reads, in one-letter code: Succinylglutamate desuccinylase (336 aa).

H59, E62, and H151 together coordinate Zn(2+). E215 is an active-site residue.

It belongs to the AspA/AstE family. Succinylglutamate desuccinylase subfamily. Zn(2+) is required as a cofactor.

The enzyme catalyses N-succinyl-L-glutamate + H2O = L-glutamate + succinate. It participates in amino-acid degradation; L-arginine degradation via AST pathway; L-glutamate and succinate from L-arginine: step 5/5. Functionally, transforms N(2)-succinylglutamate into succinate and glutamate. This Pseudomonas fluorescens (strain Pf0-1) protein is Succinylglutamate desuccinylase.